A 297-amino-acid chain; its full sequence is Small ribosomal subunit biogenesis GTPase RsgA (297 aa).

The CP-type G domain occupies 65–223; the sequence is INEIGRPAVA…IADTPGFSAI (159 aa). Residues 114–117 and 166–174 contribute to the GTP site; these read SKSD and GQSGAGKST. The Zn(2+) site is built by Cys247, Cys252, His254, and Cys260.

It belongs to the TRAFAC class YlqF/YawG GTPase family. RsgA subfamily. Monomer. Associates with 30S ribosomal subunit, binds 16S rRNA. The cofactor is Zn(2+).

Its subcellular location is the cytoplasm. Functionally, one of several proteins that assist in the late maturation steps of the functional core of the 30S ribosomal subunit. Helps release RbfA from mature subunits. May play a role in the assembly of ribosomal proteins into the subunit. Circularly permuted GTPase that catalyzes slow GTP hydrolysis, GTPase activity is stimulated by the 30S ribosomal subunit. This is Small ribosomal subunit biogenesis GTPase RsgA from Lactobacillus johnsonii (strain CNCM I-12250 / La1 / NCC 533).